We begin with the raw amino-acid sequence, 218 residues long: NADH dehydrogenase [ubiquinone] iron-sulfur protein 7, mitochondrial (218 aa).

The segment covering 34-48 has biased composition (low complexity); it reads LPALSPSTSPTSYTR. Residues 34 to 61 are disordered; that stretch reads LPALSPSTSPTSYTRPGPPSTSPPPPGL. The segment covering 49–60 has biased composition (pro residues); it reads PGPPSTSPPPPG. The [4Fe-4S] cluster site is built by Cys93, Cys94, Cys158, and Cys188.

This sequence belongs to the complex I 20 kDa subunit family. As to quaternary structure, complex I is composed of at least 49 different subunits. This is a component of the iron-sulfur (IP) fragment of the enzyme. The cofactor is [4Fe-4S] cluster.

The protein resides in the mitochondrion. It carries out the reaction a ubiquinone + NADH + 5 H(+)(in) = a ubiquinol + NAD(+) + 4 H(+)(out). Its function is as follows. Core subunit of the mitochondrial membrane respiratory chain NADH dehydrogenase (Complex I) that is believed to belong to the minimal assembly required for catalysis. Complex I functions in the transfer of electrons from NADH to the respiratory chain. The immediate electron acceptor for the enzyme is believed to be ubiquinone. The polypeptide is NADH dehydrogenase [ubiquinone] iron-sulfur protein 7, mitochondrial (Arabidopsis thaliana (Mouse-ear cress)).